The chain runs to 129 residues: Small ribosomal subunit protein uS11 (129 aa).

It belongs to the universal ribosomal protein uS11 family. Part of the 30S ribosomal subunit. Interacts with proteins S7 and S18. Binds to IF-3.

Its function is as follows. Located on the platform of the 30S subunit, it bridges several disparate RNA helices of the 16S rRNA. Forms part of the Shine-Dalgarno cleft in the 70S ribosome. This Nitrosomonas europaea (strain ATCC 19718 / CIP 103999 / KCTC 2705 / NBRC 14298) protein is Small ribosomal subunit protein uS11.